We begin with the raw amino-acid sequence, 435 residues long: Glutamate-1-semialdehyde 2,1-aminomutase (435 aa).

K266 bears the N6-(pyridoxal phosphate)lysine mark.

It belongs to the class-III pyridoxal-phosphate-dependent aminotransferase family. HemL subfamily. Homodimer. It depends on pyridoxal 5'-phosphate as a cofactor.

It is found in the cytoplasm. The catalysed reaction is (S)-4-amino-5-oxopentanoate = 5-aminolevulinate. The protein operates within porphyrin-containing compound metabolism; protoporphyrin-IX biosynthesis; 5-aminolevulinate from L-glutamyl-tRNA(Glu): step 2/2. The polypeptide is Glutamate-1-semialdehyde 2,1-aminomutase (Nitrosomonas europaea (strain ATCC 19718 / CIP 103999 / KCTC 2705 / NBRC 14298)).